The sequence spans 181 residues: Oligoribonuclease (181 aa).

Positions 8–171 (LIWIDLEMTG…DDIRESVAEL (164 aa)) constitute an Exonuclease domain. The active site involves Tyr-129.

Belongs to the oligoribonuclease family.

It localises to the cytoplasm. In terms of biological role, 3'-to-5' exoribonuclease specific for small oligoribonucleotides. This Klebsiella pneumoniae subsp. pneumoniae (strain ATCC 700721 / MGH 78578) protein is Oligoribonuclease.